Consider the following 182-residue polypeptide: MTKLSAFNFQKWIDEHKHLLKPPVGNQLVFKDADLMVTVVGGPNKRTDYHDDPVEEFFYQLKGDMLLKLHDTSTGEFYDVPIREGDIFLLPAHIRHSPQRPQEGSIGLVIEPARPEGVLDAVEWYCFECSGLVHRAEVDLESIVDDLPPLYAAFYNDEKLRTCPHCNTVHPGKNPPEGWVAL.

Position 46 (arginine 46) interacts with O2. Fe cation-binding residues include histidine 50, glutamate 56, and histidine 96. Glutamate 56 contacts substrate. Residues arginine 100 and glutamate 111 each contribute to the substrate site. Fe cation contacts are provided by cysteine 126, cysteine 129, cysteine 163, and cysteine 166.

This sequence belongs to the 3-HAO family. As to quaternary structure, homodimer. It depends on Fe(2+) as a cofactor.

The enzyme catalyses 3-hydroxyanthranilate + O2 = (2Z,4Z)-2-amino-3-carboxymuconate 6-semialdehyde. The protein operates within cofactor biosynthesis; NAD(+) biosynthesis; quinolinate from L-kynurenine: step 3/3. Functionally, catalyzes the oxidative ring opening of 3-hydroxyanthranilate to 2-amino-3-carboxymuconate semialdehyde, which spontaneously cyclizes to quinolinate. This chain is 3-hydroxyanthranilate 3,4-dioxygenase, found in Brucella anthropi (strain ATCC 49188 / DSM 6882 / CCUG 24695 / JCM 21032 / LMG 3331 / NBRC 15819 / NCTC 12168 / Alc 37) (Ochrobactrum anthropi).